Consider the following 185-residue polypeptide: Elongation factor P (185 aa).

This sequence belongs to the elongation factor P family.

It is found in the cytoplasm. It functions in the pathway protein biosynthesis; polypeptide chain elongation. Involved in peptide bond synthesis. Stimulates efficient translation and peptide-bond synthesis on native or reconstituted 70S ribosomes in vitro. Probably functions indirectly by altering the affinity of the ribosome for aminoacyl-tRNA, thus increasing their reactivity as acceptors for peptidyl transferase. This is Elongation factor P from Clostridium botulinum (strain ATCC 19397 / Type A).